Here is a 236-residue protein sequence, read N- to C-terminus: Purine nucleoside phosphorylase DeoD-type (236 aa).

His5 is a binding site for a purine D-ribonucleoside. Residues Gly21, Arg25, Arg44, and 88-91 (RVGT) each bind phosphate. Residues 180–182 (EME) and 204–205 (SD) contribute to the a purine D-ribonucleoside site. Asp205 functions as the Proton donor in the catalytic mechanism.

It belongs to the PNP/UDP phosphorylase family. As to quaternary structure, homohexamer; trimer of homodimers.

It carries out the reaction a purine D-ribonucleoside + phosphate = a purine nucleobase + alpha-D-ribose 1-phosphate. The enzyme catalyses a purine 2'-deoxy-D-ribonucleoside + phosphate = a purine nucleobase + 2-deoxy-alpha-D-ribose 1-phosphate. Catalyzes the reversible phosphorolytic breakdown of the N-glycosidic bond in the beta-(deoxy)ribonucleoside molecules, with the formation of the corresponding free purine bases and pentose-1-phosphate. This chain is Purine nucleoside phosphorylase DeoD-type, found in Shewanella amazonensis (strain ATCC BAA-1098 / SB2B).